Here is a 782-residue protein sequence, read N- to C-terminus: MNPEKDFAPLTPNIVRALNDKLYEKRKVAALEIEKLVREFVAQNNTVQIKHVIQTLSQEFALSQHPHSRKGGLIGLAACSIALGKDSGLYLKELIEPVLTCFNDADSRLRYYACEALYNIVKVARGAVLPHFNVLFDGLSKLAADPDPNVKSGSELLDRLLKDIVTESNKFDLVSFIPLLRERIYSNNQYARQFIISWILVLESVPDINLLDYLPEILDGLFQILGDNGKEIRKMCEVVLGEFLKEIKKNPSSVKFAEMANILVIHCQTTDDLIQLTAMCWMREFIQLAGRVMLPYSSGILTAVLPCLAYDDRKKSIKEVANVCNQSLMKLVTPEDDELDELRPGQRQAEPTPDDALPKQEGTASGGPDGSCDSSFSSGISVFTAASTERAPVTLHLDGIVQVLNCHLSDTAIGMMTRIAVLKWLYHLYIKTPRKMFRHTDSLFPILLQTLSDESDEVILKDLEVLAEIASSPAGQTDDPGPLDGPDLQASHSELQVPTPGRAGLLNTSGTKGLECSPSTPTMNSYFYKFMINLLKRFSSERKLLEVRGPFIIRQLCLLLNAENIFHSMADILLREEDLKFASTMVHALNTILLTSTELFQLRNQLKDLKTLESQNLFCCLYRSWCHNPVTTVSLCFLTQNYRHAYDLIQKFGDLEVTVDFLAEVDKLVQLIECPIFTYLRLQLLDVKNNPYLIKALYGLLMLLPQSSAFQLLSHRLQCVPNPELLQTEDSLKAAPKSQKADSPSIDYAELLQHFEKVQNKHLEVRHQRSGRGDHLDRRVVL.

An N-acetylmethionine modification is found at methionine 1. HEAT repeat units lie at residues 5–42 (KDFAPLTPNIVRALNDKLYEKRKVAALEIEKLVREFVA), 89–126 (LYLKELIEPVLTCFNDADSRLRYYACEALYNIVKVARG), 171–208 (FDLVSFIPLLRERIYSNNQYARQFIISWILVLESVPDI), and 212–249 (DYLPEILDGLFQILGDNGKEIRKMCEVVLGEFLKEIKK). Threonine 11 is subject to Phosphothreonine. Disordered regions lie at residues 335-372 (EDDELDELRPGQRQAEPTPDDALPKQEGTASGGPDGSC) and 471-517 (SSPA…LECS). Residues 438–475 (RHTDSLFPILLQTLSDESDEVILKDLEVLAEIASSPAG) form an HEAT 5 repeat. Low complexity predominate over residues 478–488 (DDPGPLDGPDL). A Phosphothreonine modification is found at threonine 499. Residues 506–517 (LNTSGTKGLECS) are compositionally biased toward polar residues. Serine 517 carries the phosphoserine modification. Residues 560 to 598 (LNAENIFHSMADILLREEDLKFASTMVHALNTILLTSTE) form an HEAT 6 repeat. Serine 743 carries the phosphoserine modification. A mediates interaction with the PDZ domain of NOS1 region spans residues 773 to 777 (GDHLD).

It belongs to the VAC14 family. In terms of assembly, forms pentamers. Component of the PI(3,5)P2 regulatory complex/PAS complex, at least composed of PIKFYVE, FIG4 and VAC14. VAC14 nucleates the assembly of the complex and serves as a scaffold by pentamerizing into a star-shaped structure, which can bind a single copy each of PIKFYVE and FIG4 and coordinates their activities. Interacts with NOS1. (Microbial infection) Interacts with HTLV-1 Tax. As to expression, ubiquitously expressed.

Its subcellular location is the endosome membrane. The protein localises to the microsome membrane. Its function is as follows. Scaffold protein component of the PI(3,5)P2 regulatory complex which regulates both the synthesis and turnover of phosphatidylinositol 3,5-bisphosphate (PtdIns(3,5)P2). Pentamerizes into a star-shaped structure and nucleates the assembly of the complex. The pentamer binds a single copy each of PIKFYVE and FIG4 and coordinates both PIKfyve kinase activity and FIG4 phosphatase activity, being required to maintain normal levels of phosphatidylinositol 3-phosphate (PtdIns(3)P) and phosphatidylinositol 5-phosphate (PtdIns(5)P). Plays a role in the biogenesis of endosome carrier vesicles (ECV) / multivesicular bodies (MVB) transport intermediates from early endosomes. This Homo sapiens (Human) protein is Protein VAC14 homolog (VAC14).